The primary structure comprises 217 residues: Oxygen-evolving enhancer protein 3, chloroplastic (217 aa).

Disordered regions lie at residues 1–25 (MAQA…RRAG) and 73–95 (PIKL…SDQA). The N-terminal 63 residues, 1 to 63 (MAQAMASMTG…ATGIAGGALA (63 aa)), are a transit peptide targeting the chloroplast.

The protein belongs to the PsbQ family.

Its subcellular location is the plastid. It is found in the chloroplast thylakoid membrane. This chain is Oxygen-evolving enhancer protein 3, chloroplastic, found in Oryza sativa subsp. indica (Rice).